Here is a 360-residue protein sequence, read N- to C-terminus: uncharacterized protein (360 aa).

Residues serine 193–glutamate 245 are disordered. Composition is skewed to polar residues over residues proline 202–serine 212 and arginine 225–glutamate 241.

This is an uncharacterized protein from Homo sapiens (Human).